The sequence spans 433 residues: tRNA(Ile2) 2-agmatinylcytidine synthetase TiaS (433 aa).

Belongs to the TiaS family.

The protein resides in the cytoplasm. It catalyses the reaction cytidine(34) in tRNA(Ile2) + agmatine + ATP + H2O = 2-agmatinylcytidine(34) in tRNA(Ile2) + AMP + 2 phosphate + 2 H(+). In terms of biological role, ATP-dependent agmatine transferase that catalyzes the formation of 2-agmatinylcytidine (agm2C) at the wobble position (C34) of tRNA(Ile2), converting the codon specificity from AUG to AUA. The chain is tRNA(Ile2) 2-agmatinylcytidine synthetase TiaS from Methanopyrus kandleri (strain AV19 / DSM 6324 / JCM 9639 / NBRC 100938).